Consider the following 222-residue polypeptide: Potassium-transporting ATPase KdpC subunit (222 aa).

Residues 13 to 35 (WAGLRSLLVLTVVTGVLYPLAVT) traverse the membrane as a helical segment. The interval 136-162 (TADHKVKPSDVPADAVTSSGSGLDPDI) is disordered.

The protein belongs to the KdpC family. In terms of assembly, the system is composed of three essential subunits: KdpA, KdpB and KdpC.

The protein resides in the cell membrane. Part of the high-affinity ATP-driven potassium transport (or Kdp) system, which catalyzes the hydrolysis of ATP coupled with the electrogenic transport of potassium into the cytoplasm. This subunit acts as a catalytic chaperone that increases the ATP-binding affinity of the ATP-hydrolyzing subunit KdpB by the formation of a transient KdpB/KdpC/ATP ternary complex. The polypeptide is Potassium-transporting ATPase KdpC subunit (Streptomyces avermitilis (strain ATCC 31267 / DSM 46492 / JCM 5070 / NBRC 14893 / NCIMB 12804 / NRRL 8165 / MA-4680)).